We begin with the raw amino-acid sequence, 756 residues long: Polyribonucleotide nucleotidyltransferase (756 aa).

Positions 527 and 533 each coordinate Mg(2+). Positions 593–652 (PRITTIKVPVDKIGEVIGPKGKMINSITEETGASISIEDDGTVFVGASNGEAAQAAIDKI) constitute a KH domain. The 70-residue stretch at 664-733 (GERFLGTVVK…NRGKISLVLV (70 aa)) folds into the S1 motif domain.

The protein belongs to the polyribonucleotide nucleotidyltransferase family. The cofactor is Mg(2+).

It is found in the cytoplasm. It catalyses the reaction RNA(n+1) + phosphate = RNA(n) + a ribonucleoside 5'-diphosphate. In terms of biological role, involved in mRNA degradation. Catalyzes the phosphorolysis of single-stranded polyribonucleotides processively in the 3'- to 5'-direction. The protein is Polyribonucleotide nucleotidyltransferase of Mycolicibacterium gilvum (strain PYR-GCK) (Mycobacterium gilvum (strain PYR-GCK)).